A 428-amino-acid polypeptide reads, in one-letter code: RUN domain-containing protein 3A (428 aa).

The RUN domain occupies 52–182 (DDSSEEFINF…IDFSFCLKGE (131 aa)). Residues 237-314 (ESWRNKCRKM…ELQEQLTSLI (78 aa)) are a coiled coil. A disordered region spans residues 349–375 (HRGSFPSPEPHISLTTGSQRTERKQNG).

This sequence belongs to the RUNDC3 family.

This is RUN domain-containing protein 3A (rundc3a) from Danio rerio (Zebrafish).